The following is a 293-amino-acid chain: 1D-myo-inositol 2-acetamido-2-deoxy-alpha-D-glucopyranoside deacetylase 2 (293 aa).

H6, D9, and H142 together coordinate Zn(2+).

Belongs to the MshB deacetylase family. It depends on Zn(2+) as a cofactor.

The enzyme catalyses 1D-myo-inositol 2-acetamido-2-deoxy-alpha-D-glucopyranoside + H2O = 1D-myo-inositol 2-amino-2-deoxy-alpha-D-glucopyranoside + acetate. In terms of biological role, catalyzes the deacetylation of 1D-myo-inositol 2-acetamido-2-deoxy-alpha-D-glucopyranoside (GlcNAc-Ins) in the mycothiol biosynthesis pathway. The protein is 1D-myo-inositol 2-acetamido-2-deoxy-alpha-D-glucopyranoside deacetylase 2 of Frankia alni (strain DSM 45986 / CECT 9034 / ACN14a).